The following is a 545-amino-acid chain: Phenylalanine--tRNA ligase beta subunit (545 aa).

A B5 domain is found at 268–343 (FLHKIQNVRE…MSIGYNNLEP (76 aa)). Asp-321, Asp-327, Glu-330, and Asp-331 together coordinate Mg(2+).

Belongs to the phenylalanyl-tRNA synthetase beta subunit family. Type 2 subfamily. In terms of assembly, tetramer of two alpha and two beta subunits. The cofactor is Mg(2+).

Its subcellular location is the cytoplasm. The enzyme catalyses tRNA(Phe) + L-phenylalanine + ATP = L-phenylalanyl-tRNA(Phe) + AMP + diphosphate + H(+). The sequence is that of Phenylalanine--tRNA ligase beta subunit from Saccharolobus islandicus (strain M.16.27) (Sulfolobus islandicus).